The chain runs to 128 residues: MFYSIVAIFVGAGFGALLRWFLSIGLNALLPEVPLGTLASNLIGGYLIGIAVVAFATRAGLPPEWRLFVITGFMGGLTTFSTYSVEVMTHAVQGEFGWALAVAALHLIGSFTLTGLGMWTARAWLAPA.

4 consecutive transmembrane segments (helical) span residues 5 to 25 (IVAIFVGAGFGALLRWFLSIG), 35 to 55 (LGTLASNLIGGYLIGIAVVAF), 67 to 87 (LFVITGFMGGLTTFSTYSVEV), and 96 to 116 (FGWALAVAALHLIGSFTLTGL). Residues glycine 75 and threonine 78 each coordinate Na(+).

It belongs to the fluoride channel Fluc/FEX (TC 1.A.43) family.

It localises to the cell inner membrane. The catalysed reaction is fluoride(in) = fluoride(out). With respect to regulation, na(+) is not transported, but it plays an essential structural role and its presence is essential for fluoride channel function. Its function is as follows. Fluoride-specific ion channel. Important for reducing fluoride concentration in the cell, thus reducing its toxicity. This chain is Fluoride-specific ion channel FluC, found in Burkholderia mallei (strain NCTC 10247).